The primary structure comprises 32 residues: Potassium channel toxin alpha-KTx 10.6 (32 aa).

3 cysteine pairs are disulfide-bonded: Cys3–Cys22, Cys8–Cys27, and Cys12–Cys29.

Expressed by the venom gland.

The protein resides in the secreted. Its function is as follows. Blocks human voltage-gated potassium (Kv) channels Kv1.2/KCNA2 and Kv1.3/KCNA3. Does not block human Kv1.1 at 100nM concentration. In Centruroides bonito (Scorpion), this protein is Potassium channel toxin alpha-KTx 10.6.